The chain runs to 76 residues: cAMP-dependent protein kinase inhibitor alpha (76 aa).

Thr2 carries the N-acetylthreonine modification. The interval 49–76 (KTEGEEDAQRSSTEQSGEAQGEAAKSES) is disordered.

It belongs to the PKI family.

Functionally, extremely potent competitive inhibitor of cAMP-dependent protein kinase activity, this protein interacts with the catalytic subunit of the enzyme after the cAMP-induced dissociation of its regulatory chains. The polypeptide is cAMP-dependent protein kinase inhibitor alpha (PKIA) (Homo sapiens (Human)).